Consider the following 358-residue polypeptide: Ribosomal RNA large subunit methyltransferase M (358 aa).

Residues serine 183, 216 to 219 (APGG), aspartate 235, aspartate 255, and aspartate 271 each bind S-adenosyl-L-methionine. The active-site Proton acceptor is lysine 300.

The protein belongs to the class I-like SAM-binding methyltransferase superfamily. RNA methyltransferase RlmE family. RlmM subfamily. Monomer.

The protein localises to the cytoplasm. It carries out the reaction cytidine(2498) in 23S rRNA + S-adenosyl-L-methionine = 2'-O-methylcytidine(2498) in 23S rRNA + S-adenosyl-L-homocysteine + H(+). Catalyzes the 2'-O-methylation at nucleotide C2498 in 23S rRNA. This is Ribosomal RNA large subunit methyltransferase M from Pseudomonas fluorescens (strain SBW25).